Consider the following 152-residue polypeptide: MKLILTADVDHLGSVGDTVEVKDGYGRNFLLPRGMAIVASRGAQKQADEIRRSRETKAVRDREHANEIKTAIQALGSVALPVKTAADSGKLFGSVTAGDVVAAIKKAGGPNLDKRIVRLAKAHIKAVGTHPVVMHLHPEIEVELSVDVVAES.

It belongs to the bacterial ribosomal protein bL9 family.

Functionally, binds to the 23S rRNA. This Mycobacterium ulcerans (strain Agy99) protein is Large ribosomal subunit protein bL9.